Here is a 186-residue protein sequence, read N- to C-terminus: Testis-expressed protein 29 (186 aa).

Residues 1 to 56 lie on the Extracellular side of the membrane; the sequence is MKDTKEIKRSPPHLLKKFAVCDIPLYDICDYNVTRERCRSLDCCFYRGVCYEKAVP. A helical transmembrane segment spans residues 57-77; sequence IYVQVFFTLIWFVAGAFIIAV. Residues 78–151 are Cytoplasmic-facing; that stretch reads IYRVIQGTKK…AGCCLWMKSK (74 aa). Disordered stretches follow at residues 104–138 and 151–186; these read SPTP…KTES and KPAK…QAAP. Positions 108–133 are enriched in pro residues; it reads ELIPEPIPEPIPEPIPEPIREPPPPV.

It localises to the membrane. The chain is Testis-expressed protein 29 (Tex29) from Mus musculus (Mouse).